The primary structure comprises 906 residues: Probable disease resistance RPP8-like protein 2 (906 aa).

Residues 15–68 (ELLSRESARLNGIDEQVDGLKRQLGRLQSLLKDADAKKNETERVRNFLEDVKDI) are a coiled coil. The NB-ARC domain maps to 144 to 454 (LQERQREIRQ…AEGIITPFHD (311 aa)). 190-197 (GMGGIGKT) is a binding site for ATP. LRR repeat units follow at residues 573-597 (LPLL…SIGD), 598-621 (LIHL…LGNL), 623-644 (LLLC…NVLK), 646-671 (MQEL…DLVN), 672-696 (LESL…KLSV), 704-727 (ECTF…SFHD), 740-766 (LLVL…QYRF), 767-790 (PPHL…ILEK), 791-818 (LLHL…GFPQ), and 840-865 (MPCL…KYVT).

Belongs to the disease resistance NB-LRR family. RPP8/HRT subfamily.

Functionally, potential disease resistance protein. In Arabidopsis thaliana (Mouse-ear cress), this protein is Probable disease resistance RPP8-like protein 2 (RPP8L2).